A 260-amino-acid polypeptide reads, in one-letter code: Hydroxyethylthiazole kinase 1 (260 aa).

Met-39 provides a ligand contact to substrate. Positions 115 and 160 each coordinate ATP. Gly-187 is a binding site for substrate.

This sequence belongs to the Thz kinase family. It depends on Mg(2+) as a cofactor.

It carries out the reaction 5-(2-hydroxyethyl)-4-methylthiazole + ATP = 4-methyl-5-(2-phosphooxyethyl)-thiazole + ADP + H(+). It functions in the pathway cofactor biosynthesis; thiamine diphosphate biosynthesis; 4-methyl-5-(2-phosphoethyl)-thiazole from 5-(2-hydroxyethyl)-4-methylthiazole: step 1/1. Catalyzes the phosphorylation of the hydroxyl group of 4-methyl-5-beta-hydroxyethylthiazole (THZ). The protein is Hydroxyethylthiazole kinase 1 of Streptococcus pneumoniae (strain Hungary19A-6).